We begin with the raw amino-acid sequence, 375 residues long: Ribosomal RNA large subunit methyltransferase G (375 aa).

It belongs to the methyltransferase superfamily. RlmG family.

It is found in the cytoplasm. It catalyses the reaction guanosine(1835) in 23S rRNA + S-adenosyl-L-methionine = N(2)-methylguanosine(1835) in 23S rRNA + S-adenosyl-L-homocysteine + H(+). In terms of biological role, specifically methylates the guanine in position 1835 (m2G1835) of 23S rRNA. This chain is Ribosomal RNA large subunit methyltransferase G, found in Erwinia tasmaniensis (strain DSM 17950 / CFBP 7177 / CIP 109463 / NCPPB 4357 / Et1/99).